Consider the following 384-residue polypeptide: 23S rRNA (uracil(747)-C(5))-methyltransferase RlmC (384 aa).

Positions 3, 11, 14, and 87 each coordinate [4Fe-4S] cluster. S-adenosyl-L-methionine is bound by residues glutamine 212, phenylalanine 241, glutamate 262, and asparagine 309. Cysteine 336 (nucleophile) is an active-site residue.

It belongs to the class I-like SAM-binding methyltransferase superfamily. RNA M5U methyltransferase family. RlmC subfamily.

The enzyme catalyses uridine(747) in 23S rRNA + S-adenosyl-L-methionine = 5-methyluridine(747) in 23S rRNA + S-adenosyl-L-homocysteine + H(+). Catalyzes the formation of 5-methyl-uridine at position 747 (m5U747) in 23S rRNA. In Shewanella amazonensis (strain ATCC BAA-1098 / SB2B), this protein is 23S rRNA (uracil(747)-C(5))-methyltransferase RlmC.